Consider the following 648-residue polypeptide: MNILGFFQRLGRALQLPIAVLPVAALLLRFGQPDLLNVAFIAQAGGAIFDNLALIFAIGVASSWSKDSAGAAALAGAVGYFVLTKAMVTINPEINMGVLAGIITGLVGGAAYNRWSDIKLPDFLSFFGGKRFVPIATGFFCLVLAAIFGYVWPPVQHAIHAGGEWIVSAGALGSGIFGFINRLLIPTGLHQVLNTIAWFQIGEFTNAAGTVFHGDINRFYAGDGTAGMFMSGFFPIMMFGLPGAALAMYFAAPKERRPMVGGMLLSVAVTAFLTGVTEPLEFLFMFLAPLLYLLHALLTGISLFVATLLGIHAGFSFSAGAIDYALMYNLPAASQNVWMLLVMGVIFFAIYFVVFSLVIRMFNLKTPGREDKEDEIVTEEANSNTEEGLTQLATNYIAAVGGTDNLKAIDACITRLRLTVADSARVNDTMCKRLGASGVVKLNKQTIQVIVGAKAESIGDAMKKVVARGPVAAASAEATPATAAPVAKPQAVPNAVSIAELVSPITGDVVALDQVPDEAFASKAVGDGVAVKPTDKIVVSPAAGTIVKIFNTNHAFCLETEKGAEIVVHMGIDTVALEGKGFKRLVEEGAQVSAGQPILEMDLDYLNANARSMISPVVCSNIDDFSGLIIKAQGHIVAGQTPLYEIKK.

N-formylmethionine is present on methionine 1. In terms of domain architecture, PTS EIIC type-1 spans 1-371 (MNILGFFQRL…FNLKTPGRED (371 aa)). 12 helical membrane passes run 16–36 (LPIA…PDLL), 38–58 (VAFI…IFAI), 70–90 (GAAA…MVTI), 92–112 (PEIN…GAAY), 132–152 (FVPI…GYVW), 159–179 (IHAG…IFGF), 192–212 (VLNT…GTVF), 232–252 (GFFP…YFAA), 260–280 (VGGM…TEPL), 282–302 (FLFM…TGIS), 303–323 (LFVA…GAID), and 339–359 (MLLV…SLVI). A PTS EIIB type-1 domain is found at 390–472 (TQLATNYIAA…KKVVARGPVA (83 aa)). Cysteine 412 serves as the catalytic Phosphocysteine intermediate; for EIIB activity. Position 412 is a phosphocysteine; by EIIA (cysteine 412). In terms of domain architecture, PTS EIIA type-1 spans 517–621 (DEAFASKAVG…SMISPVVCSN (105 aa)). Residues histidine 554 and histidine 569 each contribute to the Zn(2+) site. Histidine 569 serves as the catalytic Tele-phosphohistidine intermediate; for EIIA activity. Histidine 569 is subject to Phosphohistidine; by HPr.

Zn(2+) serves as cofactor. In terms of processing, 60% of isolated protein was N-formylated.

The protein localises to the cell inner membrane. The catalysed reaction is N(pros)-phospho-L-histidyl-[protein] + N-acetyl-D-glucosamine(out) = N-acetyl-D-glucosamine 6-phosphate(in) + L-histidyl-[protein]. With respect to regulation, P-chloromercuribenzoate inhibits the accumulation of both N-acetyl-D-glucosamine and antibiotic streptozotocin (2-deoxy-2-(3-methyl-3-nitrosoureido)-D-glucopyranose). N-acetyl-D-glucosamine is a competitive inhibitor for the uptake of streptozotocin. In terms of biological role, the phosphoenolpyruvate-dependent sugar phosphotransferase system (sugar PTS), a major carbohydrate active transport system, catalyzes the phosphorylation of incoming sugar substrates concomitantly with their translocation across the cell membrane. This system is involved in N-acetylglucosamine transport. It can also transport and phosphorylate the antibiotic streptozotocin. Could play a significant role in the recycling of peptidoglycan. This chain is PTS system N-acetylglucosamine-specific EIICBA component, found in Escherichia coli (strain K12).